A 273-amino-acid chain; its full sequence is MPCEELEIVWKNIKAEARALADCEPMLASFYHATLLKHENLGSALSYMLANKLASPIMPAIAIREVVEEAYAADPEMIASAACDIQAVRTRDPAVDKYSTPLLYLKGFHALQAYRIGHWLWNKGRRALAIFLQNQVSVSFQVDIHPAAKIGRGIMLDHATGIVVGETAVIEDDVSILQSVTLGGTGKTSGDRHPKIREGVMIGAGAKILGNIEVGRGAKIGAGSVVLQPVPPHTTAAGVPARIVGKPGSDKPSMDMDQHFNGIHHTFEYGDGI.

The protein belongs to the transferase hexapeptide repeat family. Part of the cysteine synthase complex formed at a ratio of 1 copy of this protein and 2 copies of O-acetylserine sulfhydrylase (cysK). The complex reversibly dissociates in the presence of O-acetyl-L-serine in the absence of hydrogen sulfide.

It is found in the cytoplasm. The enzyme catalyses L-serine + acetyl-CoA = O-acetyl-L-serine + CoA. Its pathway is amino-acid biosynthesis; L-cysteine biosynthesis; L-cysteine from L-serine: step 1/2. Its activity is regulated as follows. Sensitive to feedback inhibition by L-cysteine. The protein is Serine acetyltransferase (cysE) of Salmonella typhimurium (strain LT2 / SGSC1412 / ATCC 700720).